The following is a 295-amino-acid chain: 4-diphosphocytidyl-2-C-methyl-D-erythritol kinase (295 aa).

The active site involves K18. 101 to 111 is a binding site for ATP; it reads PMGGGIGGGSS. The active site involves D143.

It belongs to the GHMP kinase family. IspE subfamily.

It carries out the reaction 4-CDP-2-C-methyl-D-erythritol + ATP = 4-CDP-2-C-methyl-D-erythritol 2-phosphate + ADP + H(+). The protein operates within isoprenoid biosynthesis; isopentenyl diphosphate biosynthesis via DXP pathway; isopentenyl diphosphate from 1-deoxy-D-xylulose 5-phosphate: step 3/6. Its function is as follows. Catalyzes the phosphorylation of the position 2 hydroxy group of 4-diphosphocytidyl-2C-methyl-D-erythritol. The chain is 4-diphosphocytidyl-2-C-methyl-D-erythritol kinase from Vibrio cholerae serotype O1 (strain ATCC 39315 / El Tor Inaba N16961).